A 102-amino-acid polypeptide reads, in one-letter code: Acylphosphatase 1 (102 aa).

An Acylphosphatase-like domain is found at 12 to 100 (TRLVRVRGRV…PRFDRFEQLP (89 aa)). Active-site residues include R27 and N45.

It belongs to the acylphosphatase family.

The enzyme catalyses an acyl phosphate + H2O = a carboxylate + phosphate + H(+). This chain is Acylphosphatase 1 (acyP1), found in Ralstonia nicotianae (strain ATCC BAA-1114 / GMI1000) (Ralstonia solanacearum).